A 4662-amino-acid chain; its full sequence is Protein PF3D7_1417600 (4662 aa).

Transmembrane regions (helical) follow at residues isoleucine 136–isoleucine 156 and tyrosine 161–isoleucine 181. The stretch at isoleucine 466–asparagine 489 is one LRR 1 repeat. Positions tyrosine 583–glutamate 710 are disordered. The span at asparagine 590–asparagine 644 shows a compositional bias: low complexity. The segment covering aspartate 650–glutamate 666 has biased composition (basic and acidic residues). A compositionally biased stretch (basic residues) spans lysine 690–lysine 701. The 74-residue stretch at tyrosine 783–phenylalanine 856 folds into the HSA domain. The interval glycine 942–asparagine 967 is disordered. An LRR 2 repeat occupies asparagine 1150 to tyrosine 1172. Residues asparagine 1505 to asparagine 1524 show a composition bias toward low complexity. Disordered regions lie at residues asparagine 1505–serine 1540 and lysine 1705–aspartate 1761. Over residues asparagine 1710–aspartate 1761 the composition is skewed to basic and acidic residues. 2 LRR repeats span residues isoleucine 2063 to lysine 2086 and aspartate 2129 to aspartate 2153. The tract at residues lysine 2228–glutamate 2261 is disordered. Basic residues predominate over residues lysine 2230–isoleucine 2241. Over residues glutamate 2246–glutamate 2261 the composition is skewed to acidic residues. LRR repeat units lie at residues leucine 2672 to aspartate 2695, asparagine 2773 to isoleucine 2796, isoleucine 2864 to asparagine 2888, and alanine 2904 to serine 2929. A disordered region spans residues methionine 2956–asparagine 2975. LRR repeat units lie at residues glutamine 3377–methionine 3400, asparagine 3438–serine 3461, serine 3756–asparagine 3781, glutamine 3935–asparagine 3960, glutamine 3965–glutamine 3985, and proline 3986–asparagine 4010. The stretch at aspartate 4203–glutamine 4272 forms a coiled coil. LRR repeat units follow at residues tyrosine 4296–lysine 4321 and glutamine 4333–glutamine 4357. Positions glutamine 4384–glutamine 4412 are disordered.

It localises to the membrane. The sequence is that of Protein PF3D7_1417600 from Plasmodium falciparum (isolate 3D7).